Consider the following 1245-residue polypeptide: Structural polyprotein (1245 aa).

Residues 1-106 form a disordered region; the sequence is MNRGFFNMLG…KTKPGKRQRM (106 aa). The host transcription inhibition stretch occupies residues 37 to 70; the sequence is GLASQIQQLTTAVSALVIGQATRPQNPRPRPPPR. Residues 38–49 show a composition bias toward polar residues; sequence LASQIQQLTTAV. The short motif at 63–100 is the Nuclear localization signal element; that stretch reads PRPRPPPRQKKQAPKQPPKPKKPKPQEKKKKQPAKTKP. Positions 67–106 are enriched in basic residues; that stretch reads PPPRQKKQAPKQPPKPKKPKPQEKKKKQPAKTKPGKRQRM. Residues 86 to 115 form a binding to the viral RNA region; the sequence is KPQEKKKKQPAKTKPGKRQRMALKLEADRL. Residues 100–114 are ribosome-binding; sequence PGKRQRMALKLEADR. Residues 114-264 form the Peptidase S3 domain; that stretch reads RLFDVKNEDG…KTTPEGTEEW (151 aa). His-141 functions as the Charge relay system in the catalytic mechanism. The short motif at 146 to 156 is the Nuclear export signal element; it reads IDHPVLSKLKF. An interaction with spike glycoprotein E2 region spans residues 157-162; that stretch reads TKSSAY. Asp-163 serves as the catalytic Charge relay system. The segment at 185–195 is dimerization of the capsid protein; it reads PEGFYNWHHGA. Catalysis depends on Ser-215, which acts as the Charge relay system. Residues 221–225 form a dimerization of the capsid protein region; that stretch reads DNSGR. Residues 249–253 are interaction with spike glycoprotein E2; sequence SKGKT. Residues 265-279 form a functions as an uncleaved signal peptide for the precursor of protein E3/E2 region; sequence SAAPLVTAMCLLGNV. The N-linked (GlcNAc...) asparagine; by host glycan is linked to Asn-278. Disulfide bonds link Cys-283-Cys-289, Cys-480-Cys-594, Cys-529-Cys-554, and Cys-531-Cys-548. Residues 329–690 lie on the Extracellular side of the membrane; it reads SVTDDFTLTS…HEIVQHYYHR (362 aa). An N-linked (GlcNAc...) asparagine; by host glycan is attached at Asn-524. Asn-646 carries N-linked (GlcNAc...) asparagine; by host glycosylation. The helical transmembrane segment at 691-718 threads the bilayer; sequence HPVYTILAVASAAVAMMIGVTVAALCAC. The segment at 719–723 is interaction with the capsid protein; the sequence is KARRE. The Cytoplasmic portion of the chain corresponds to 719-751; sequence KARRECLTPYALAPNAVIPTSLALLCCVRSANA. Residues Cys-724, Cys-744, and Cys-745 are each lipidated (S-palmitoyl cysteine; by host). A disulfide bond links Cys-724 and Cys-745. Residues 752–763 are Extracellular-facing; it reads ETFTETMSYFWS. The helical transmembrane segment at 764-784 threads the bilayer; the sequence is NSQPFFWVQLCIPLAAVIVLM. Residue Arg-785 is a topological domain, cytoplasmic. The chain crosses the membrane as a helical span at residues 786-806; the sequence is CCSCCLPFLVVAGAYLAKVDA. The Extracellular portion of the chain corresponds to 807 to 1214; the sequence is YEHATTVPNV…QAAISKTSWS (408 aa). Cystine bridges form between Cys-855–Cys-920, Cys-868–Cys-900, Cys-869–Cys-902, and Cys-874–Cys-884. The tract at residues 890-907 is E1 fusion peptide loop; the sequence is VYPFMWGGAQCFCDSENS. Residues Asn-945 and Asn-1051 are each glycosylated (N-linked (GlcNAc...) asparagine; by host). 4 disulfide bridges follow: Cys-1065/Cys-1077, Cys-1107/Cys-1182, Cys-1112/Cys-1186, and Cys-1134/Cys-1176. Residues 1215–1239 traverse the membrane as a helical segment; that stretch reads WLFALFGGASSLLIIGLTIFACSMM. The Cytoplasmic portion of the chain corresponds to 1240 to 1245; sequence LTSTRR.

Homodimer. Homomultimer. Interacts with host karyopherin KPNA4; this interaction allows the nuclear import of the viral capsid protein. Interacts with spike glycoprotein E2. Interacts with host IRAK1; the interaction leads to inhibition of IRAK1-dependent signaling. In terms of assembly, the precursor of protein E3/E2 and E1 form a heterodimer shortly after synthesis. As to quaternary structure, the precursor of protein E3/E2 and E1 form a heterodimer shortly after synthesis. Processing of the precursor of protein E3/E2 into E2 and E3 results in a heterodimer of the spike glycoproteins E2 and E1. Spike at virion surface are constituted of a trimer of E2-E1 heterodimers. After target cell attachment and endocytosis, E1 change conformation to form homotrimers. E2-E1 heterodimers interact with host VLDLR or LRP8/APOER2 to mediate viral entry. Interacts with 6K protein. Processing of the precursor of protein E3/E2 into E2 and E3 results in a heterodimer of the spike glycoproteins E2 and E1. Spike at virion surface are constituted of a trimer of E2-E1 heterodimers. E2-E1 heterodimers interact with host VLDLR or LRP8/APOER2 to mediate viral entry. Interacts with 6K protein. Interacts with the capsid protein. In terms of assembly, oligomer. Interacts with spike glycoprotein E1. Interacts with spike glycoprotein E2. Structural polyprotein: Specific enzymatic cleavages in vivo yield mature proteins. Capsid protein is auto-cleaved during polyprotein translation, unmasking a signal peptide at the N-terminus of the precursor of E3/E2. The remaining polyprotein is then targeted to the host endoplasmic reticulum, where host signal peptidase cleaves it into pE2, 6K and E1 proteins. pE2 is further processed to mature E3 and E2 by host furin in trans-Golgi vesicle. Post-translationally, palmitoylated via thioester bonds. These palmitoylations may induce disruption of the C-terminus transmembrane. This would result in the reorientation of E2 C-terminus from lumenal to cytoplasmic side. In terms of processing, N-glycosylated. Palmitoylated via thioester bonds.

Its subcellular location is the virion. It localises to the host cytoplasm. The protein resides in the host cell membrane. It is found in the host nucleus. The protein localises to the virion membrane. Its subcellular location is the host Golgi apparatus. It localises to the host trans-Golgi network. The protein resides in the host endoplasmic reticulum. The catalysed reaction is Autocatalytic release of the core protein from the N-terminus of the togavirus structural polyprotein by hydrolysis of a -Trp-|-Ser- bond.. Its function is as follows. Forms an icosahedral capsid with a T=4 symmetry composed of 240 copies of the capsid protein surrounded by a lipid membrane through which penetrate 80 spikes composed of trimers of E1-E2 heterodimers. The capsid protein binds to the viral RNA genome at a site adjacent to a ribosome binding site for viral genome translation following genome release. Possesses a protease activity that results in its autocatalytic cleavage from the nascent structural protein. Following its self-cleavage, the capsid protein transiently associates with ribosomes, and within several minutes the protein binds to viral RNA and rapidly assembles into icosahedric core particles. The resulting nucleocapsid eventually associates with the cytoplasmic domain of the spike glycoprotein E2 at the cell membrane, leading to budding and formation of mature virions. In case of infection, new virions attach to target cells and after clathrin-mediated endocytosis their membrane fuses with the host endosomal membrane. This leads to the release of the nucleocapsid into the cytoplasm, followed by an uncoating event necessary for the genomic RNA to become accessible. The uncoating might be triggered by the interaction of capsid proteins with ribosomes. Binding of ribosomes would release the genomic RNA since the same region is genomic RNA-binding and ribosome-binding. Specifically inhibits interleukin-1 receptor-associated kinase 1/IRAK1-dependent signaling during viral entry, representing a means by which the alphaviruses may evade innate immune detection and activation prior to viral gene expression. In terms of biological role, provides the signal sequence for the translocation of the precursor of protein E3/E2 to the host endoplasmic reticulum. Furin-cleaved E3 remains associated with spike glycoprotein E1 and mediates pH protection of the latter during the transport via the secretory pathway. After virion release from the host cell, the assembly protein E3 is gradually released in the extracellular space. Functionally, plays a role in viral attachment to target host cell, by binding to the cell receptors VLDLR or LRP8/APOER2. Synthesized as a pE2 precursor which is processed by furin at the cell membrane just before virion budding, giving rise to E2-E1 heterodimer. The pE2-E1 heterodimer is stable, whereas E2-E1 is unstable and dissociate at low pH. pE2 is processed at the last step, presumably to avoid E1 fusion activation before its final export to cell surface. E2 C-terminus contains a transitory transmembrane that would be disrupted by palmitoylation, resulting in reorientation of the C-terminal tail from lumenal to cytoplasmic side. This step is critical since E2 C-terminus is involved in budding by interacting with capsid proteins. This release of E2 C-terminus in cytoplasm occurs lately in protein export, and precludes premature assembly of particles at the endoplasmic reticulum membrane. Acts as a viroporin that participates in virus glycoprotein processing and transport to the plasma membrane, cell permeabilization and budding of viral particles. Disrupts the calcium homeostasis of the cell, probably at the endoplasmic reticulum level resulting in the increased levels of cytoplasmic calcium. Because of its lipophilic properties, the 6K protein is postulated to influence the selection of lipids that interact with the transmembrane domains of the glycoproteins, which, in turn, affects the deformability of the bilayer required for the extreme curvature that occurs as budding proceeds. Present in low amount in virions, about 3% compared to viral glycoproteins. Its function is as follows. Class II viral fusion protein. Fusion activity is inactive as long as E1 is bound to E2 in mature virion. After virus attachment to target cell via host VLDLR or LRP8/APOER2 and endocytosis, acidification of the endosome induces dissociation of E1/E2 heterodimer and concomitant trimerization of the E1 subunits. This E1 trimer is fusion active, and promotes release of viral nucleocapsid in cytoplasm after endosome and viral membrane fusion. Efficient fusion requires the presence of cholesterol and sphingolipid in the target membrane. In Acrocephalus scirpaceus (Eurasian reed-warbler), this protein is Structural polyprotein.